Consider the following 60-residue polypeptide: Large ribosomal subunit protein uL30 (60 aa).

The protein belongs to the universal ribosomal protein uL30 family. As to quaternary structure, part of the 50S ribosomal subunit.

The polypeptide is Large ribosomal subunit protein uL30 (Limosilactobacillus reuteri (strain DSM 20016) (Lactobacillus reuteri)).